A 702-amino-acid polypeptide reads, in one-letter code: MNSLFASTARGLEELLKTELENLGAVECQVVQGGVHFKGDTRLVYQSLMWSRLASRIMLPLGECKVYSDLDLYLGVQAINWTEMFNPGATFAVHFSGLNDTIRNSQYGAMKVKDAIVDAFTRKNLPRPNVDRDAPDIRVNVWLHKETASIALDLSGDGLHLRGYRDRAGIAPIKETLAAAIVMRSGWQPGTPLLDPMCGSGTLLIEAAMLATDRAPGLHRGRWGFSGWAQHDEAIWQEVKAEAQTRARKGLAEYSSHFYGSDSDARVIQRARTNARLAGIAELITFEVKDVAQLTNPLLKGPYGTVLSNPPYGERLDSEPALIALHSLLGRIMKNQFGGWNLSLFSASPDLLSCLQLRADKQYKAKNGPLDCVQKNYHVAESTPDSKPAMVAEDYANRLRKNLKKFEKWARQEGIECYRLYDADLPEYNVAVDRYSDWVVVQEYAPPKTIDAHKARQRLFDIIAATISVLGIAPNKLVLKTRERQKGKNQYQKLGEKGEFLEVTEYNAHLWVNLTDYLDTGLFLDHRIARRMLGQMSKGKDFLNLFSYTGSATVHAGLGGARSTTTVDMSRTYLEWAERNLRLNGLTGRAHRLIQADCLAWLREANEQFDLIFIDPPTFSNSKRMEDAFDVQRDHLALMKDLKRLLRAGGTIMFSNNKRGFRMDLDGLAKLGLKAQEITQKTLSQDFARNRQIHNCWLITAA.

Positions 43 to 154 (LVYQSLMWSR…KETASIALDL (112 aa)) constitute a THUMP domain.

This sequence belongs to the methyltransferase superfamily. RlmKL family.

The protein resides in the cytoplasm. The enzyme catalyses guanosine(2445) in 23S rRNA + S-adenosyl-L-methionine = N(2)-methylguanosine(2445) in 23S rRNA + S-adenosyl-L-homocysteine + H(+). It carries out the reaction guanosine(2069) in 23S rRNA + S-adenosyl-L-methionine = N(2)-methylguanosine(2069) in 23S rRNA + S-adenosyl-L-homocysteine + H(+). In terms of biological role, specifically methylates the guanine in position 2445 (m2G2445) and the guanine in position 2069 (m7G2069) of 23S rRNA. The sequence is that of Ribosomal RNA large subunit methyltransferase K/L from Shigella boydii serotype 18 (strain CDC 3083-94 / BS512).